Here is a 211-residue protein sequence, read N- to C-terminus: Large ribosomal subunit protein uL3 (211 aa).

The protein belongs to the universal ribosomal protein uL3 family. In terms of assembly, part of the 50S ribosomal subunit. Forms a cluster with proteins L14 and L19.

Functionally, one of the primary rRNA binding proteins, it binds directly near the 3'-end of the 23S rRNA, where it nucleates assembly of the 50S subunit. The protein is Large ribosomal subunit protein uL3 of Desulfatibacillum aliphaticivorans.